Reading from the N-terminus, the 251-residue chain is MSGHSKWATIKRKKAATDQKRGNLFTKLVKEITIAAKMGGGDPSGNPRLRLAIDTARANSMPMDNIQRAIKKGTGELEGATYEEITYEGYGPGGIAIIIETATDNRNRTVADIRHLMSRSGGSLGENGSVGWMFNRKGSIEVPKSAISEDDLMELLLDAGLEELESDDEQYYTVLTDVKDLEPVKKALEEAEIPFENAKMDMIPDNYVELDVEDARKALKLIDALENSDDAQAVYSNMDISESVMSALEEE.

Belongs to the TACO1 family.

It is found in the cytoplasm. This Chlorobaculum parvum (strain DSM 263 / NCIMB 8327) (Chlorobium vibrioforme subsp. thiosulfatophilum) protein is Probable transcriptional regulatory protein Cpar_0525.